The sequence spans 1165 residues: Symplekin (1165 aa).

5 HEAT repeats span residues 23–58, 61–95, 98–140, 147–186, and 218–257; these read TATA…TVLG, AELA…QVCK, VELL…YLCS, SAEQ…GVVV, and KLQE…IAKM. Residues 365 to 384 form a disordered region; sequence DQQQREMELDTEELERQKQK. The segment covering 367–384 has biased composition (basic and acidic residues); the sequence is QQREMELDTEELERQKQK.

It belongs to the Symplekin family. In terms of assembly, interacts with Cpsf73 and Cpsf100 forming a core cleavage factor required for both polyadenylated and histone mRNA processing. Interacts with Slbp and Lsm11.

The protein localises to the nucleus. In terms of biological role, component of a protein complex required for cotranscriptional processing of 3'-ends of polyadenylated and histone pre-mRNA. Involved in germline stem cell transit amplification, differentiation and mitosis-to-meiosis transition. This Drosophila melanogaster (Fruit fly) protein is Symplekin.